A 123-amino-acid polypeptide reads, in one-letter code: Small ribosomal subunit protein uS13 (123 aa).

The interval 95-123 (GLPVRGQKTKTNARTRKGPKRTVGRKKKK) is disordered. A compositionally biased stretch (basic residues) spans 101 to 123 (QKTKTNARTRKGPKRTVGRKKKK).

The protein belongs to the universal ribosomal protein uS13 family. As to quaternary structure, part of the 30S ribosomal subunit. Forms a loose heterodimer with protein S19. Forms two bridges to the 50S subunit in the 70S ribosome.

Located at the top of the head of the 30S subunit, it contacts several helices of the 16S rRNA. In the 70S ribosome it contacts the 23S rRNA (bridge B1a) and protein L5 of the 50S subunit (bridge B1b), connecting the 2 subunits; these bridges are implicated in subunit movement. Contacts the tRNAs in the A and P-sites. The sequence is that of Small ribosomal subunit protein uS13 from Alkaliphilus metalliredigens (strain QYMF).